Consider the following 393-residue polypeptide: Glycerol-3-phosphate dehydrogenase [NAD(+)] 1 (393 aa).

NAD(+)-binding positions include 45-50, F133, K157, and A190; that span reads GSGNWG. Substrate is bound at residue K157. Residue K250 is the Proton acceptor of the active site. R316 and Q345 together coordinate NAD(+). Residue 316-317 coordinates substrate; sequence RN.

The protein belongs to the NAD-dependent glycerol-3-phosphate dehydrogenase family.

The catalysed reaction is sn-glycerol 3-phosphate + NAD(+) = dihydroxyacetone phosphate + NADH + H(+). The polypeptide is Glycerol-3-phosphate dehydrogenase [NAD(+)] 1 (gpd1) (Cyberlindnera jadinii (Torula yeast)).